Here is a 150-residue protein sequence, read N- to C-terminus: Transcriptional repressor NrdR (150 aa).

A disordered region spans residues 1–22 (MKCPYCSAPDSRVVNSRPSDDG). The segment at 3–34 (CPYCSAPDSRVVNSRPSDDGASIRRRRECLRC) is a zinc-finger region. In terms of domain architecture, ATP-cone spans 49-136 (LMVLKRGGQR…VYRDFDSLER (88 aa)).

This sequence belongs to the NrdR family. Requires Zn(2+) as cofactor.

Negatively regulates transcription of bacterial ribonucleotide reductase nrd genes and operons by binding to NrdR-boxes. In Deinococcus geothermalis (strain DSM 11300 / CIP 105573 / AG-3a), this protein is Transcriptional repressor NrdR.